The chain runs to 207 residues: Outer-membrane lipoprotein carrier protein (207 aa).

The signal sequence occupies residues 1 to 21 (MRLIRMLLLPVLAVTTLSAHA).

The protein belongs to the LolA family. Monomer.

The protein localises to the periplasm. Its function is as follows. Participates in the translocation of lipoproteins from the inner membrane to the outer membrane. Only forms a complex with a lipoprotein if the residue after the N-terminal Cys is not an aspartate (The Asp acts as a targeting signal to indicate that the lipoprotein should stay in the inner membrane). The protein is Outer-membrane lipoprotein carrier protein of Pseudomonas fluorescens (strain ATCC BAA-477 / NRRL B-23932 / Pf-5).